The following is a 298-amino-acid chain: Enoyl-CoA hydratase AFT6-1 (298 aa).

Positions 1-39 (MTYSTTKSVAMNPDEDAPPSDINSSGRLMSHSEVEPRGN) are disordered.

This sequence belongs to the enoyl-CoA hydratase/isomerase family.

The catalysed reaction is a (3S)-3-hydroxyacyl-CoA = a (2E)-enoyl-CoA + H2O. It catalyses the reaction a 4-saturated-(3S)-3-hydroxyacyl-CoA = a (3E)-enoyl-CoA + H2O. The protein operates within mycotoxin biosynthesis. In terms of biological role, enoyl-CoA hydratase; part of the gene clusters that mediate the biosynthesis of the host-selective toxins (HSTs) AF-toxins responsible for Alternaria black spot of strawberry disease by the strawberry pathotype. AF-toxin I and III are valine derivatives of 2,3-dyhydroxy-isovaleric acid and 2-hydroxy-isovaleric acid respectively, while AF II is an isoleucine derivative of 2-hydroxy-valeric acid. These derivatives are bound to a 9,10-epoxy-8-hydroxy-9-methyl-decatrienoic acid (EDA) moiety. On cellular level, AF-toxin affects plasma membrane of susceptible cells and cause a sudden increase in loss of K(+) after a few minutes of toxin treatment. The aldo-keto reductase AFTS1 catalyzes the conversion of 2-keto-isovaleric acid (2-KIV) to 2-hydroxy-isovaleric acid (2-HIV) by reduction of its ketone to an alcohol. The acyl-CoA ligase AFT1, the hydrolase AFT2 and the enoyl-CoA hydratases AFT3 and AFT6, but also the polyketide synthase AFT9, the acyl-CoA dehydrogenase AFT10, the cytochrome P450 monooxygenase AFT11 and the oxidoreductase AFT12 are all involved in the biosynthesis of the AK-, AF- and ACT-toxin common EDA structural moiety. The exact function of each enzyme, and of additional enzymes identified within the AF-toxin clusters have still to be determined. This is Enoyl-CoA hydratase AFT6-1 from Alternaria alternata (Alternaria rot fungus).